Reading from the N-terminus, the 31-residue chain is GQLALKQQTVNRLLNKIYSPISDAYSELKQL.

It belongs to the tyrosinase family. Hemocyanin subfamily. Hemolymph.

The protein resides in the secreted. It is found in the extracellular space. Hemocyanins are copper-containing oxygen carriers occurring freely dissolved in the hemolymph of many mollusks and arthropods. The sequence is that of Hemocyanin subunit 2 from Maja squinado (Mediterranean spider crab).